We begin with the raw amino-acid sequence, 183 residues long: Mid1-interacting protein 1 (183 aa).

Met-1 carries the post-translational modification N-acetylmethionine. Residues Ser-75 and Ser-79 each carry the phosphoserine modification.

The protein belongs to the SPOT14 family. As to quaternary structure, homodimer in the absence of THRSP. Heterodimer with THRSP. The homodimer interacts with ACACA and ACACB. Promotes polymerization of Acetyl-CoA carboxylase to form complexes that contain MID1IP1 and ACACA and/or ACACB. Interaction with THRSP interferes with ACACA binding.

Its subcellular location is the nucleus. The protein localises to the cytoplasm. The protein resides in the cytoskeleton. Plays a role in the regulation of lipogenesis in liver. Up-regulates ACACA enzyme activity. Required for efficient lipid biosynthesis, including triacylglycerol, diacylglycerol and phospholipid. Involved in stabilization of microtubules. The protein is Mid1-interacting protein 1 (MID1IP1) of Homo sapiens (Human).